The chain runs to 381 residues: Succinyl-diaminopimelate desuccinylase (381 aa).

His-71 serves as a coordination point for Zn(2+). Asp-73 is a catalytic residue. Asp-104 provides a ligand contact to Zn(2+). Glu-138 acts as the Proton acceptor in catalysis. Zn(2+) is bound by residues Glu-139, Glu-167, and His-353.

It belongs to the peptidase M20A family. DapE subfamily. In terms of assembly, homodimer. The cofactor is Zn(2+). Co(2+) is required as a cofactor.

It catalyses the reaction N-succinyl-(2S,6S)-2,6-diaminopimelate + H2O = (2S,6S)-2,6-diaminopimelate + succinate. It functions in the pathway amino-acid biosynthesis; L-lysine biosynthesis via DAP pathway; LL-2,6-diaminopimelate from (S)-tetrahydrodipicolinate (succinylase route): step 3/3. Functionally, catalyzes the hydrolysis of N-succinyl-L,L-diaminopimelic acid (SDAP), forming succinate and LL-2,6-diaminopimelate (DAP), an intermediate involved in the bacterial biosynthesis of lysine and meso-diaminopimelic acid, an essential component of bacterial cell walls. The protein is Succinyl-diaminopimelate desuccinylase of Shewanella halifaxensis (strain HAW-EB4).